The sequence spans 380 residues: DNA primase small subunit PriS (380 aa).

Active-site residues include aspartate 101, aspartate 103, and aspartate 282.

The protein belongs to the eukaryotic-type primase small subunit family. As to quaternary structure, heterodimer of a small subunit (PriS) and a large subunit (PriL). It depends on Mg(2+) as a cofactor. The cofactor is Mn(2+).

Its function is as follows. Catalytic subunit of DNA primase, an RNA polymerase that catalyzes the synthesis of short RNA molecules used as primers for DNA polymerase during DNA replication. The small subunit contains the primase catalytic core and has DNA synthesis activity on its own. Binding to the large subunit stabilizes and modulates the activity, increasing the rate of DNA synthesis while decreasing the length of the DNA fragments, and conferring RNA synthesis capability. The DNA polymerase activity may enable DNA primase to also catalyze primer extension after primer synthesis. May also play a role in DNA repair. In Hyperthermus butylicus (strain DSM 5456 / JCM 9403 / PLM1-5), this protein is DNA primase small subunit PriS.